The primary structure comprises 1094 residues: MATEAAPPRIAVRLPSTSVRDAGANYRIARYVAVVAGLLGAVLAIATPLLPVNQTTAQLNWPQNGTFASVEAPLIGYVATDLNITVPCQAAAGLAGSQNTGKTVLLSTVPKQAPKAVDRGLLLQRANDDLVLVVRNVPLVTAPLSQVLGPTCQRLTFTAHADRVAAEFVGLVQGPNAEHPGAPLRGERSGYDFRPQIVGVFTDLAGPAPPGLSFSASVDTRYSSSPTPLKMAAMILGVALTGAALVALHILDTADGMRHRRFLPARWWSTGGLDTLVIAVLVWWHFVGANTSDDGYILTMARVSEHAGYMANYYRWFGTPEAPFGWYYDLLALWAHVSTASIWMRLPTLAMALTCWWVISREVIPRLGHAVKTSRAAAWTAAGMFLAVWLPLDNGLRPEPIIALGILLTWCSVERAVATSRLLPVAIACIIGALTLFSGPTGIASIGALLVAIGPLRTILHRRSRRFGVLPLVAPILAAATVTAIPIFRDQTFAGEIQANLLKRAVGPSLKWFDEHIRYERLFMASPDGSIARRFAVLALVLALAVSVAMSLRKGRIPGTAAGPSRRIIGITIISFLAMMFTPTKWTHHFGVFAGLAGSLGALAAVAVTGAAMRSRRNRTVFAAVVVFVLALSFASVNGWWYVSNFGVPWSNSFPKWRWSLTTALLELTVLVLLLAAWFHFVANGDGRRTARPTRFRARLAGIVQSPLAIATWLLVLFEVVSLTQAMISQYPAWSVGRSNLQALAGKTCGLAEDVLVELDPNAGMLAPVTAPLADALGAGLSEAFTPNGIPADVTADPVMERPGDRSFLNDDGLITGSEPGTEGGTTAAPGINGSRARLPYNLDPARTPVLGSWRAGVQVPAMLRSGWYRLPTNEQRDRAPLLVVTAAGRFDSREVRLQWATDEQAAAGHHGGSMEFADVGAAPAWRNLRAPLSAIPSTATQVRLVADDQDLAPQHWIALTPPRIPRVRTLQNVVGAADPVFLDWLVGLAFPCQRPFGHQYGVDETPKWRILPDRFGAEANSPVMDHNGGGPLGITELLMRATTVASYLKDDWFRDWGALQRLTPYYPDAQPADLNLGTVTRSGLWSPAPLRRG.

Helical transmembrane passes span 28–50 (IARY…TPLL), 232–251 (AAMI…LHIL), 264–286 (PARW…WWHF), 341–360 (SIWM…WVIS), 373–392 (TSRA…WLPL), 431–453 (IGAL…LVAI), 466–488 (RFGV…IPIF), 530–552 (SIAR…AMSL), 565–582 (SRRI…MMFT), 586–608 (WTHH…AVAV), 620–642 (TVFA…GWWY), 657–679 (WRWS…AAWF), and 700–722 (LAGI…EVVS). Residues 817–831 (GSEPGTEGGTTAAPG) are compositionally biased toward low complexity. The tract at residues 817–836 (GSEPGTEGGTTAAPGINGSR) is disordered.

It belongs to the emb family.

It localises to the cell membrane. In terms of biological role, arabinosyl transferase responsible for the polymerization of arabinose into the arabinan of arabinogalactan. In Mycobacterium tuberculosis (strain ATCC 25618 / H37Rv), this protein is Probable arabinosyltransferase C (embC).